The primary structure comprises 241 residues: Pyridoxine 5'-phosphate synthase (241 aa).

Asn-7 lines the 3-amino-2-oxopropyl phosphate pocket. 9 to 10 is a 1-deoxy-D-xylulose 5-phosphate binding site; sequence DH. Arg-18 lines the 3-amino-2-oxopropyl phosphate pocket. His-43 serves as the catalytic Proton acceptor. 1-deoxy-D-xylulose 5-phosphate contacts are provided by Arg-45 and His-50. Glu-70 (proton acceptor) is an active-site residue. Thr-100 is a 1-deoxy-D-xylulose 5-phosphate binding site. His-191 serves as the catalytic Proton donor. 3-amino-2-oxopropyl phosphate contacts are provided by residues Gly-192 and 213–214; that span reads GH.

It belongs to the PNP synthase family. In terms of assembly, homooctamer; tetramer of dimers.

It is found in the cytoplasm. It catalyses the reaction 3-amino-2-oxopropyl phosphate + 1-deoxy-D-xylulose 5-phosphate = pyridoxine 5'-phosphate + phosphate + 2 H2O + H(+). The protein operates within cofactor biosynthesis; pyridoxine 5'-phosphate biosynthesis; pyridoxine 5'-phosphate from D-erythrose 4-phosphate: step 5/5. Functionally, catalyzes the complicated ring closure reaction between the two acyclic compounds 1-deoxy-D-xylulose-5-phosphate (DXP) and 3-amino-2-oxopropyl phosphate (1-amino-acetone-3-phosphate or AAP) to form pyridoxine 5'-phosphate (PNP) and inorganic phosphate. The sequence is that of Pyridoxine 5'-phosphate synthase from Solidesulfovibrio magneticus (strain ATCC 700980 / DSM 13731 / RS-1) (Desulfovibrio magneticus).